Consider the following 146-residue polypeptide: MGTPQSSGLRSIRVAVRKTCTMVNVWPLCSVRSSTMGSRCSKANQLTPCDSTWKTYGNVSWNTVRLASLYSSCLTRTLVMPRSTPYASVTLSCAVLTSRKPQCTTSGFRTVRIAMRSCLTWALRVMTFIAIIRAARTLDSTSNASS.

In Escherichia coli (Bacteriophage T3), this protein is Gene 19.2 protein (19.2).